The following is a 172-amino-acid chain: Adenine phosphoribosyltransferase (172 aa).

Belongs to the purine/pyrimidine phosphoribosyltransferase family. As to quaternary structure, homodimer.

It is found in the cytoplasm. The enzyme catalyses AMP + diphosphate = 5-phospho-alpha-D-ribose 1-diphosphate + adenine. Its pathway is purine metabolism; AMP biosynthesis via salvage pathway; AMP from adenine: step 1/1. Its function is as follows. Catalyzes a salvage reaction resulting in the formation of AMP, that is energically less costly than de novo synthesis. In Methanococcus maripaludis (strain C5 / ATCC BAA-1333), this protein is Adenine phosphoribosyltransferase.